Reading from the N-terminus, the 696-residue chain is Polyribonucleotide nucleotidyltransferase (696 aa).

Mg(2+)-binding residues include aspartate 483 and aspartate 489. The KH domain maps to 550 to 609 (PRITTIWVKVDKIRDVIGSGGKNIRSVTEATGVSIDIDDTGKINIASTNKEACDLAIKMI). The S1 motif domain maps to 619 to 687 (GKLYMGTVKK…KQGKIKLSRK (69 aa)).

This sequence belongs to the polyribonucleotide nucleotidyltransferase family. Mg(2+) is required as a cofactor.

It is found in the cytoplasm. It catalyses the reaction RNA(n+1) + phosphate = RNA(n) + a ribonucleoside 5'-diphosphate. Its function is as follows. Involved in mRNA degradation. Catalyzes the phosphorolysis of single-stranded polyribonucleotides processively in the 3'- to 5'-direction. The protein is Polyribonucleotide nucleotidyltransferase of Geobacter sp. (strain M21).